The sequence spans 307 residues: Woronin sorting complex protein (307 aa).

A run of 3 helical transmembrane segments spans residues 106-125, 146-167, and 207-227; these read MATY…IWIL, NLIV…IAGA, and AWMP…NYIT. Residues 241–264 are compositionally biased toward basic and acidic residues; sequence GDGAHGDHRHDRERERDRERERHS. The interval 241 to 307 is disordered; sequence GDGAHGDHRH…YPSLGQNPRY (67 aa). The span at 266 to 278 shows a compositional bias: low complexity; sequence PPHGHGPSHGGRP.

The protein belongs to the peroxisomal membrane protein PXMP2/4 family. As to quaternary structure, self-assembles into detergent-resistant oligomers and forms a complex with hex-1 assemblies.

Its subcellular location is the peroxisome membrane. It localises to the cell septum. Woronin sorting complex protein involved in both Woronin bodies (WB) formation and inherence. Localizes to large peroxisome membranes where it self-assembles into detergent-resistant oligomers that envelop hex-1 assemblies, producing asymmetrical nascent WBs. These structures are then delivered to the cell cortex, which permits partitioning of the nascent WB and WB inheritance. The protein is Woronin sorting complex protein of Neurospora crassa (strain ATCC 24698 / 74-OR23-1A / CBS 708.71 / DSM 1257 / FGSC 987).